Consider the following 326-residue polypeptide: Porin-like protein H (326 aa).

The first 19 residues, 1–19 (MKKTLVALAILTAAGSANA), serve as a signal peptide directing secretion.

The protein belongs to the Gram-negative porin family. Oligomer.

Its subcellular location is the cell outer membrane. Functionally, forms pores that allow passive diffusion of small molecules across the outer membrane. This is Porin-like protein H (ompH) from Photobacterium profundum (strain SS9).